We begin with the raw amino-acid sequence, 571 residues long: uncharacterized protein (571 aa).

A run of 5 helical transmembrane segments spans residues 10–29, 36–55, 65–87, 96–118, and 166–188; these read VRLH…HFIG, VSLG…GLLF, WAFF…FASL, ALAV…LFRF, and ATTY…PRLL. An RCK C-terminal domain is found at 294 to 378; it reads TEVDDQELLS…IATAARNLGF (85 aa). Transmembrane regions (helical) follow at residues 388–406, 411–433, 446–465, 480–502, 509–531, and 546–568; these read LVYL…LLQV, VPLG…WLYS, LRLL…GLAA, LFAK…GLLL, LPPI…LNAL, and VPFA…CAVA.

It belongs to the AAE transporter (TC 2.A.81) family.

Its subcellular location is the cell membrane. This is an uncharacterized protein from Bordetella bronchiseptica (strain ATCC BAA-588 / NCTC 13252 / RB50) (Alcaligenes bronchisepticus).